The chain runs to 1225 residues: Cohesin subunit SA-3 (1225 aa).

Residues 1 to 97 (MSSPLQRAVG…HSRKQSEPPA (97 aa)) are disordered. Positions 15-26 (ALSASSSSSASL) are enriched in low complexity. The segment covering 45 to 54 (LADEDTDFED) has biased composition (acidic residues). Composition is skewed to basic residues over residues 59 to 69 (NVKKRAAKRPP) and 76 to 90 (KHPK…RHSR). The SCD domain maps to 309–394 (FVHRYRDVLP…SRFKDRMVSM (86 aa)). Disordered stretches follow at residues 546 to 567 (SEGH…KERK), 1063 to 1113 (AETS…STAV), and 1177 to 1225 (EEDE…IEDF). Residues 1078-1089 (VEGPAKPNREDV) are compositionally biased toward basic and acidic residues. Residues 1090 to 1099 (SSSQEESLQL) are compositionally biased toward low complexity. Acidic residues predominate over residues 1177–1191 (EEDEEEELEIQDESN). Over residues 1198-1209 (DMQASSYSSTSE) the composition is skewed to polar residues. A Phosphoserine modification is found at serine 1203. A compositionally biased stretch (acidic residues) spans 1216–1225 (DSTELDIEDF).

Belongs to the SCC3 family. As to quaternary structure, component of the meiosis-specific cohesin complex, which also contains the SMC1 (SMC1A or SMC1B) and SMC3 heterodimer. Such complex likely contains RAD21, or the meiosis-specific related protein REC8. Interacts with CCDC79/TERB1; recruiting cohesin to telomeres to develop structural rigidity. Phosphorylated. As to expression, testis specific.

The protein resides in the nucleus. It is found in the chromosome. The protein localises to the centromere. Its function is as follows. Meiosis specific component of cohesin complex. The cohesin complex is required for the cohesion of sister chromatids after DNA replication. The cohesin complex apparently forms a large proteinaceous ring within which sister chromatids can be trapped. At anaphase, the complex is cleaved and dissociates from chromatin, allowing sister chromatids to segregate. The meiosis-specific cohesin complex probably replaces mitosis specific cohesin complex when it dissociates from chromatin during prophase I. This chain is Cohesin subunit SA-3 (STAG3), found in Homo sapiens (Human).